The following is a 349-amino-acid chain: Leucine-rich repeat-containing protein 58 (349 aa).

LRR repeat units follow at residues 14-34 (NLTHLGLENLNLELVSENKRK), 35-56 (DVQQLLLPHNRLVVLPPHVNSF), 58-80 (HLHLLDISNNNMAYIGEEILGLT), 81-102 (KLKTLLAKNNRLDEFSFPKELG), 105-125 (RLEVLNLSGNRFEEIPDQFLQ), 128-149 (TLKSLSLGGNRLKSIPAEIENL), 151-173 (SLEFLYLGGNFISSIPPELANLP), 174-195 (YLSYLVLCDNRIQSVPPQLAQV), 197-217 (SLRSLSLHNLLTYLPREILSL), and 219-239 (QLQELSLRGNPLVVRFVRDLT).

This chain is Leucine-rich repeat-containing protein 58 (lrrc58), found in Xenopus tropicalis (Western clawed frog).